Here is a 963-residue protein sequence, read N- to C-terminus: Exportin-T (963 aa).

Methionine 1 is modified (N-acetylmethionine). At lysine 635 the chain carries N6-acetyllysine.

It belongs to the exportin family. In terms of assembly, found in a complex with XPOT, Ran and tRNA. Probably found in a complex with nucleoporins. Interacts with Ran and tRNA in a GTP-dependent manner.

The protein resides in the nucleus. It is found in the cytoplasm. Its function is as follows. Mediates the nuclear export of aminoacylated tRNAs. In the nucleus binds to tRNA and to the GTPase Ran in its active GTP-bound form. Docking of this trimeric complex to the nuclear pore complex (NPC) is mediated through binding to nucleoporins. Upon transit of a nuclear export complex into the cytoplasm, disassembling of the complex and hydrolysis of Ran-GTP to Ran-GDP (induced by RANBP1 and RANGAP1, respectively) cause release of the tRNA from the export receptor. XPOT then return to the nuclear compartment and mediate another round of transport. The directionality of nuclear export is thought to be conferred by an asymmetric distribution of the GTP- and GDP-bound forms of Ran between the cytoplasm and nucleus. The polypeptide is Exportin-T (Xpot) (Mus musculus (Mouse)).